The sequence spans 285 residues: Polyamine aminopropyltransferase (285 aa).

Residues 5–238 (EMWYETLHTG…GIMTFAWASD (234 aa)) enclose the PABS domain. S-methyl-5'-thioadenosine is bound at residue Gln-33. Residues His-64 and Asp-88 each coordinate spermidine. S-methyl-5'-thioadenosine is bound by residues Glu-108 and 140–141 (DG). Catalysis depends on Asp-158, which acts as the Proton acceptor. 158–161 (DCTD) is a spermidine binding site. S-methyl-5'-thioadenosine is bound at residue Pro-165.

Belongs to the spermidine/spermine synthase family. As to quaternary structure, homodimer or homotetramer.

The protein localises to the cytoplasm. It catalyses the reaction S-adenosyl 3-(methylsulfanyl)propylamine + putrescine = S-methyl-5'-thioadenosine + spermidine + H(+). It participates in amine and polyamine biosynthesis; spermidine biosynthesis; spermidine from putrescine: step 1/1. Its function is as follows. Catalyzes the irreversible transfer of a propylamine group from the amino donor S-adenosylmethioninamine (decarboxy-AdoMet) to putrescine (1,4-diaminobutane) to yield spermidine. This is Polyamine aminopropyltransferase from Erwinia tasmaniensis (strain DSM 17950 / CFBP 7177 / CIP 109463 / NCPPB 4357 / Et1/99).